Reading from the N-terminus, the 359-residue chain is 3-dehydroquinate synthase (359 aa).

NAD(+) is bound by residues 70-75 (DGEQYK), 105-109 (GVIGD), 129-130 (TT), K142, K151, and 169-172 (FYKT). Zn(2+)-binding residues include E184, H247, and H264.

The protein belongs to the sugar phosphate cyclases superfamily. Dehydroquinate synthase family. Requires Co(2+) as cofactor. It depends on Zn(2+) as a cofactor. NAD(+) serves as cofactor.

Its subcellular location is the cytoplasm. The catalysed reaction is 7-phospho-2-dehydro-3-deoxy-D-arabino-heptonate = 3-dehydroquinate + phosphate. Its pathway is metabolic intermediate biosynthesis; chorismate biosynthesis; chorismate from D-erythrose 4-phosphate and phosphoenolpyruvate: step 2/7. In terms of biological role, catalyzes the conversion of 3-deoxy-D-arabino-heptulosonate 7-phosphate (DAHP) to dehydroquinate (DHQ). This is 3-dehydroquinate synthase from Francisella tularensis subsp. tularensis (strain FSC 198).